Reading from the N-terminus, the 493-residue chain is MHPHRDPRGLWLLLPSLSLLLFEVARAGRAVVSCPAACLCASNILSCSKQQLPNVPHSLPSYTALLDLSHNNLSRLRAEWTPTRLTQLHSLLLSHNHLNFISSEAFSPVPNLRYLDLSSNQLRTLDEFLFSDLQVLEVLLLYNNHIMAVDRCAFDDMAQLQKLYLSQNQISRFPLELVKEGAKLPKLTLLDLSSNKLKNLPLPDLQKLPAWIKNGLYLHNNPLNCDCELYQLFSHWQYRQLSSVMDFQEDLYCMNSKKLHNVFNLSFLNCGEYKERAWEAHLGDTLIIKCDTKQQGMTKVWVTPSNERVLDEVTNGTVSVSKDGSLLFQQVQVEDGGVYTCYAMGETFNETLSVELKVHNFTLHGHHDTLNTAYTTLVGCILSVVLVLIYLYLTPCRCWCRGVEKPSSHQGDSLSSSMLSTTPNHDPMAGGDKDDGFDRRVAFLEPAGPGQGQNGKLKPGNTLPVPEATGKGQRRMSDPESVSSVFSDTPIVV.

Residues 1 to 27 (MHPHRDPRGLWLLLPSLSLLLFEVARA) form the signal peptide. An LRRNT domain is found at 28-61 (GRAVVSCPAACLCASNILSCSKQQLPNVPHSLPS). The Extracellular segment spans residues 28–372 (GRAVVSCPAA…LHGHHDTLNT (345 aa)). 2 disulfide bridges follow: Cys34–Cys40 and Cys38–Cys47. LRR repeat units lie at residues 62-83 (YTAL…WTPT), 87-108 (QLHS…AFSP), 111-132 (NLRY…LFSD), 135-156 (VLEV…AFDD), 159-179 (QLQK…ELVK), and 186-206 (KLTL…PDLQ). N-linked (GlcNAc...) asparagine glycosylation is present at Asn72. One can recognise an LRRCT domain in the interval 221–272 (NPLNCDCELYQLFSHWQYRQLSSVMDFQEDLYCMNSKKLHNVFNLSFLNCGE). 3 disulfide bridges follow: Cys225/Cys253, Cys227/Cys270, and Cys290/Cys341. Residues Asn264, Asn315, Asn349, and Asn360 are each glycosylated (N-linked (GlcNAc...) asparagine). The Ig-like C2-type domain occupies 269-353 (NCGEYKERAW…MGETFNETLS (85 aa)). The chain crosses the membrane as a helical span at residues 373-393 (AYTTLVGCILSVVLVLIYLYL). At 394 to 493 (TPCRCWCRGV…SVFSDTPIVV (100 aa)) the chain is on the cytoplasmic side. The interval 405–493 (KPSSHQGDSL…SVFSDTPIVV (89 aa)) is disordered. A compositionally biased stretch (polar residues) spans 408 to 424 (SHQGDSLSSSMLSTTPN). Residues 431-442 (GDKDDGFDRRVA) show a composition bias toward basic and acidic residues. Phosphoserine is present on residues Ser477 and Ser481.

This sequence belongs to the immunoglobulin superfamily. AMIGO family. Homodimer, and heterodimer with AMIGO2 and AMIGO3. Interacts with KCNB1.

Its subcellular location is the cell membrane. It localises to the perikaryon. The protein resides in the cell projection. The protein localises to the dendrite. It is found in the axon. Promotes growth and fasciculation of neurites from cultured hippocampal neurons. May be involved in fasciculation as well as myelination of developing neural axons. May have a role in regeneration as well as neural plasticity in the adult nervous system. May mediate homophilic as well as heterophilic cell-cell interaction and contribute to signal transduction through its intracellular domain. Assembled with KCNB1 modulates the gating characteristics of the delayed rectifier voltage-dependent potassium channel KCNB1. The protein is Amphoterin-induced protein 1 of Homo sapiens (Human).